The primary structure comprises 973 residues: Peptidyl-glycine alpha-amidating monooxygenase (973 aa).

The first 20 residues, 1–20 (MAGRVPSLLVLLVFPSSCLA), serve as a signal peptide directing secretion. Positions 1-494 (MAGRVPSLLV…EGTWEPEHTG (494 aa)) are peptidylglycine alpha-hydroxylating monooxygenase. Positions 21-30 (FRSPLSVFKR) are excised as a propeptide. At 31–863 (FKETTRPFSN…QKLIKEPGSG (833 aa)) the chain is on the intragranular side. Disulfide bonds link Cys42–Cys181, Cys76–Cys121, Cys109–Cys126, Cys222–Cys329, and Cys288–Cys310. Positions 102 and 103 each coordinate Cu(2+). Cu(2+) contacts are provided by His167, His237, His239, and Met309. The tract at residues 495 to 817 (DFHMEEALDW…LTEKLEHRSV (323 aa)) is peptidyl-alpha-hydroxyglycine alpha-amidating lyase. NHL repeat units lie at residues 498–541 (MEEA…NSFD), 567–608 (AAVL…LDPN), 617–662 (LGRS…FSPS), and 670–714 (GEES…FKTD). Position 517 (Val517) interacts with Ca(2+). An a protein-binding site is contributed by Arg530. His582 contacts Zn(2+). Residue Leu584 coordinates Ca(2+). An intrachain disulfide couples Cys631 to Cys652. A protein is bound at residue Tyr651. Position 687 (His687) interacts with Zn(2+). A disulfide bridge links Cys699 with Cys710. Residue Arg703 coordinates a protein. N-linked (GlcNAc...) asparagine glycosylation is present at Asn762. One copy of the NHL 5 repeat lies at 766–809 (GEIIDIFKPVRKHFDMPHDIVASEDGTVYIGDAHTNTVWKFTLT). Residue His783 coordinates Zn(2+). Asp784 provides a ligand contact to Ca(2+). Residues 864 to 887 (VPVVLITTLLVIPVVVLLAIAIFI) form a helical membrane-spanning segment. Sulfotyrosine is present on residues Ile875 and Arg893. The Cytoplasmic segment spans residues 888 to 973 (RWKKSRAFGD…PLPALAPSSS (86 aa)). Phosphoserine is present on residues Ser918, Ser929, and Ser942. The interaction with RASSF9 stretch occupies residues 925–942 (NFFASRKGYSRKGFDRLS). A disordered region spans residues 937–973 (GFDRLSTEGSDQEKEDDGSESEEEYSAPLPALAPSSS). Phosphothreonine is present on Thr943. Residue Ser946 is modified to Phosphoserine; by UHMK1; in vitro. The segment covering 949-961 (EKEDDGSESEEEY) has biased composition (acidic residues). Ser957 bears the Phosphoserine mark. The segment covering 962–973 (SAPLPALAPSSS) has biased composition (low complexity).

This sequence in the C-terminal section; belongs to the peptidyl-alpha-hydroxyglycine alpha-amidating lyase family. The protein in the N-terminal section; belongs to the copper type II ascorbate-dependent monooxygenase family. As to quaternary structure, monomer. Interacts with RASSF9. The cofactor is Zn(2+). It depends on Cu(2+) as a cofactor.

It localises to the cytoplasmic vesicle. It is found in the secretory vesicle membrane. The protein localises to the membrane. The protein resides in the secreted. It carries out the reaction a [peptide]-C-terminal glycine + 2 L-ascorbate + O2 = a [peptide]-C-terminal (2S)-2-hydroxyglycine + 2 monodehydro-L-ascorbate radical + H2O. The catalysed reaction is a [peptide]-C-terminal (2S)-2-hydroxyglycine = a [peptide]-C-terminal amide + glyoxylate. It catalyses the reaction N-dodecanoylglycine + 2 L-ascorbate + O2 = N-dodecanoyl-(2S)-hydroxyglycine + 2 monodehydro-L-ascorbate radical + H2O. The enzyme catalyses N-dodecanoyl-(2S)-hydroxyglycine = dodecanamide + glyoxylate. It carries out the reaction N-(9Z,12Z,15Z)-octadecatrienoylglycine + 2 L-ascorbate + O2 = N-(9Z,12Z,15Z)-octadecatrienoyl-(2S)-hydroxyglycine + 2 monodehydro-L-ascorbate radical + H2O. The catalysed reaction is N-(9Z,12Z,15Z)-octadecatrienoyl-(2S)-hydroxyglycine = (9Z,12Z,15Z)-octadecatrienamide + glyoxylate. It catalyses the reaction N-(9Z-octadecenoyl)glycine + 2 L-ascorbate + O2 = N-(9Z-octadecenoyl)-(2S)-hydroxyglycine + 2 monodehydro-L-ascorbate radical + H2O. The enzyme catalyses N-(9Z-octadecenoyl)-(2S)-hydroxyglycine = (9Z)-octadecenamide + glyoxylate. It carries out the reaction N-tetradecanoylglycine + 2 L-ascorbate + O2 = N-tetradecanoyl-(2S)-hydroxyglycine + 2 monodehydro-L-ascorbate radical + H2O. The catalysed reaction is N-tetradecanoyl-(2S)-hydroxyglycine = tetradecamide + glyoxylate. It catalyses the reaction N-decanoylglycine + 2 L-ascorbate + O2 = N-decanoyl-(2S)-hydroxyglycine + 2 monodehydro-L-ascorbate radical + H2O. The enzyme catalyses N-decanoyl-(2S)-hydroxyglycine = decanamide + glyoxylate. It carries out the reaction N-octanoylglycine + 2 L-ascorbate + O2 = N-octanoyl-(2S)-hydroxyglycine + 2 monodehydro-L-ascorbate radical + H2O. The catalysed reaction is N-octanoyl-(2S)-hydroxyglycine = octanamide + glyoxylate. Its activity is regulated as follows. PAM activity is inhibited by EDTA, phenylglyoxal and diethyl pyrocarbonate. PAL activity is stimulated by cadmium and inhibited by mercury. Its function is as follows. Bifunctional enzyme that catalyzes amidation of the C-terminus of proteins. Alpha-amidation is present at the C-terminus of many endocrine hormones and neuropeptides and is required for their activity. C-terminal amidation also takes place in response to protein fragmentation triggered by oxidative stress, promoting degradation of amidated protein fragments by the proteasome. Alpha-amidation involves two sequential reactions, both of which are catalyzed by separate catalytic domains of the enzyme. The first step, catalyzed by peptidyl alpha-hydroxylating monooxygenase (PHM) domain, is the copper-, ascorbate-, and O2- dependent stereospecific hydroxylation (with S stereochemistry) at the alpha-carbon (C-alpha) of the C-terminal glycine of the peptidylglycine substrate. The second step, catalyzed by the peptidylglycine amidoglycolate lyase (PAL) domain, is the zinc-dependent cleavage of the N-C-alpha bond, producing the alpha-amidated peptide and glyoxylate. Similarly, catalyzes the two-step conversion of an N-fatty acylglycine to a primary fatty acid amide and glyoxylate. The sequence is that of Peptidyl-glycine alpha-amidating monooxygenase from Homo sapiens (Human).